The chain runs to 395 residues: Transcriptional coactivator yorkie (395 aa).

Residues 73 to 100 (NSFFTPPAPSHSRANSADSTYDAGSQSS) form a disordered region. Phosphoserine is present on residues serine 82, serine 88, serine 100, serine 117, and serine 145. The segment covering 84 to 100 (SRANSADSTYDAGSQSS) has biased composition (polar residues). Disordered regions lie at residues 129–150 (PSPQHSRLAIHHSRARSSPASL) and 162–199 (AAAANNPNANPSSQQQPAGPTFPENSAQEFPSGAPASS). Phosphoserine; by CDK7 is present on serine 146. Serine 149 is modified (phosphoserine). The span at 162-179 (AAAANNPNANPSSQQQPA) shows a compositional bias: low complexity. Serine 227 carries the post-translational modification Phosphoserine. Tyrosine 228 bears the Phosphotyrosine mark. At serine 232 the chain carries Phosphoserine. 2 consecutive WW domains span residues 241–274 (GALPPGWEQAKTNDGQIYYLNHTTKSTQWEDPRI) and 310–343 (GPLPDGWEQAVTESGDLYFINHIDRTTSWNDPRM).

It belongs to the YAP1 family. As to quaternary structure, interacts (via WW domains) with wts. Interacts (via N-terminus) with sd (via C-terminus) and this interaction enhances the transcriptional activity of sd. The phosphorylated form interacts with 14-3-3epsilon and 14-3-3zeta. Interacts with Ack and ex. Its activity is regulated by multiple phosphorylation events. Phosphorylation at Ser-88, Ser-145 and Ser-227 negatively regulate its activity and restrict its nuclear localization. Wts-mediated phosphorylation at Ser-145 promotes interaction with 14-3-3epsilon and 14-3-3zeta. Phosphorylation at Ser-88 and Ser-227 regulate nuclear localization and activity independent of 14-3-3 association. Phosphorylation at Ser-146 by Cdk7 promotes its stability by preventing ubiquitination by the DCX(DCAF12) complex. In terms of processing, ubiquitinated by the DCX(DCAF12) complex, leading to its degradation. Phosphorylation at Ser-146 by Cdk7 prevents ubiquitination by the DCX(DCAF12) complex.

It localises to the cytoplasm. It is found in the nucleus. Transcriptional coactivator which is the critical downstream regulatory target in the Hippo/SWH (Sav/Wts/Hpo) signaling pathway that plays a pivotal role in organ size control and tumor suppression by restricting proliferation and promoting apoptosis. The core of this pathway is composed of a kinase cascade wherein Hippo (Hpo), in complex with its regulatory protein Salvador (Sav), phosphorylates and activates Warts (Wts) in complex with its regulatory protein Mats, which in turn phosphorylates and inactivates the Yorkie (Yki) oncoprotein. The Hippo/SWH signaling pathway inhibits the activity of the transcriptional complex formed by Scalloped (sd) and Yki and the target genes of this pathway include cyclin-E (cycE), diap1 and bantam. Regulates the expression of G1/S-specific CycE and diap1, thereby promoting cell proliferation and inhibiting apoptosis. Required for transcriptional activity of sd in wing imaginal disks. Induces expression of expression of vestigial (vg) in wing and haltere disks and the expression of transcription factor E2f (E2f). This chain is Transcriptional coactivator yorkie (yki), found in Drosophila melanogaster (Fruit fly).